We begin with the raw amino-acid sequence, 245 residues long: Uridylate kinase (245 aa).

12-15 (KLSG) provides a ligand contact to ATP. Positions 20–25 (GEKGVG) are involved in allosteric activation by GTP. Residue Gly-54 participates in UMP binding. Positions 55 and 59 each coordinate ATP. Residues Asp-74 and 135-142 (VGSPYFST) each bind UMP. Residues Asn-163, Tyr-169, and Asp-172 each coordinate ATP.

This sequence belongs to the UMP kinase family. In terms of assembly, homohexamer.

It is found in the cytoplasm. The catalysed reaction is UMP + ATP = UDP + ADP. It functions in the pathway pyrimidine metabolism; CTP biosynthesis via de novo pathway; UDP from UMP (UMPK route): step 1/1. Allosterically activated by GTP. Inhibited by UTP. Functionally, catalyzes the reversible phosphorylation of UMP to UDP. This chain is Uridylate kinase, found in Streptococcus mutans serotype c (strain ATCC 700610 / UA159).